We begin with the raw amino-acid sequence, 209 residues long: Kunitz trypsin inhibitor 1 (209 aa).

An N-terminal signal peptide occupies residues 1-22; that stretch reads MKATISITTIFLVVALAAPSLA. 2 disulfide bridges follow: cysteine 63–cysteine 107 and cysteine 154–cysteine 162. Asparagine 156 is a glycosylation site (N-linked (GlcNAc...) asparagine).

This sequence belongs to the protease inhibitor I3 (leguminous Kunitz-type inhibitor) family.

Exhibits Kunitz trypsin protease inhibitor activity. The sequence is that of Kunitz trypsin inhibitor 1 from Arabidopsis thaliana (Mouse-ear cress).